The following is a 268-amino-acid chain: Tryptophan synthase alpha chain (268 aa).

Residues E49 and D60 each act as proton acceptor in the active site.

Belongs to the TrpA family. In terms of assembly, tetramer of two alpha and two beta chains.

It catalyses the reaction (1S,2R)-1-C-(indol-3-yl)glycerol 3-phosphate + L-serine = D-glyceraldehyde 3-phosphate + L-tryptophan + H2O. The protein operates within amino-acid biosynthesis; L-tryptophan biosynthesis; L-tryptophan from chorismate: step 5/5. The alpha subunit is responsible for the aldol cleavage of indoleglycerol phosphate to indole and glyceraldehyde 3-phosphate. The polypeptide is Tryptophan synthase alpha chain (Shigella flexneri serotype 5b (strain 8401)).